Reading from the N-terminus, the 87-residue chain is Putative sodium channel toxin Ts40 (87 aa).

The N-terminal stretch at 1–19 is a signal peptide; it reads MTALFYLLFLTSVIIETHQ. 3 cysteine pairs are disulfide-bonded: C41–C63, C47–C68, and C51–C70.

This sequence belongs to the long (4 C-C) scorpion toxin superfamily. Sodium channel inhibitor family. As to expression, expressed by the venom gland.

It is found in the secreted. In terms of biological role, putative sodium channel toxin. The sequence is that of Putative sodium channel toxin Ts40 from Tityus serrulatus (Brazilian scorpion).